A 385-amino-acid polypeptide reads, in one-letter code: Benzoylsuccinyl-CoA thiolase subunit BbsB (385 aa).

Arg19 lines the CoA pocket. Cys84 (acyl-thioester intermediate) is an active-site residue. Residues Gly121, Arg193, Cys204, and Cys205 each contribute to the CoA site.

It belongs to the thiolase-like superfamily. Thiolase family. Heterotetramer composed of two BbsA subunits and two BbsB subunits. BbsB forms homodimeric subcomplexes. Both BbsA and BbsB are essential for enzymatic activity.

The enzyme catalyses (S)-2-benzoylsuccinyl-CoA + CoA = benzoyl-CoA + succinyl-CoA. It functions in the pathway xenobiotic degradation; toluene degradation. Functionally, component of the BbsAB thiolase complex, which catalyzes the thiolytic cleavage of (S)-2-benzoylsuccinyl-CoA to succinyl-CoA and benzoyl-CoA, the final step of anaerobic toluene metabolism. The sequence is that of Benzoylsuccinyl-CoA thiolase subunit BbsB from Thauera aromatica.